The primary structure comprises 242 residues: ATP synthase subunit 4, mitochondrial (242 aa).

The N-terminal 35 residues, 1-35, are a transit peptide targeting the mitochondrion; sequence MSFRALTMRSAVARTALNNTIRSARVATPYLGIRH.

This sequence belongs to the eukaryotic ATPase B chain family. As to quaternary structure, F-type ATPases have 2 components, CF(1) - the catalytic core - and CF(0) - the membrane proton channel. In yeast, the dimeric form of ATP synthase consists of 17 polypeptides: alpha, beta, gamma, delta, epsilon, 4 (B), 5 (OSCP), 6 (A), 8, 9 (C), d, E (Tim11), f, g, h, i/j and k.

Its subcellular location is the mitochondrion. It localises to the mitochondrion inner membrane. Functionally, mitochondrial membrane ATP synthase (F(1)F(0) ATP synthase or Complex V) produces ATP from ADP in the presence of a proton gradient across the membrane which is generated by electron transport complexes of the respiratory chain. F-type ATPases consist of two structural domains, F(1) - containing the extramembraneous catalytic core, and F(0) - containing the membrane proton channel, linked together by a central stalk and a peripheral stalk. During catalysis, ATP synthesis in the catalytic domain of F(1) is coupled via a rotary mechanism of the central stalk subunits to proton translocation. Part of the complex F(0) domain and the peripheric stalk, which acts as a stator to hold the catalytic alpha(3)beta(3) subcomplex and subunit a/ATP6 static relative to the rotary elements. The sequence is that of ATP synthase subunit 4, mitochondrial (ATP4) from Candida glabrata (strain ATCC 2001 / BCRC 20586 / JCM 3761 / NBRC 0622 / NRRL Y-65 / CBS 138) (Yeast).